Reading from the N-terminus, the 742-residue chain is MYPQFRRGHLAAAVLFASSSLLGGQALAEDERLEELDERAESVVQLGDEVVLGTAEQELKQAPGVSIITAEDIRKRPPVNDLSEIIRTMPGVNLTGNSSSGQRGNNRQIDIRGMGPENTLILVDGKPVSSRNSVRYGWRGERDTRGDSNWVPPEEVERIEVLRGPAAARYGSGAAGGVVNIITKRPTDRLRGSMTVFTNIPESSKDGATRRANFSLSGPLTEALSFRAYGSANKTDSDDTDINLGHTVNPSRTVAGREGVRNRDLSGMLSWQVTPDQVVDFEAGFSRQGNIYAGDTQNNNGTANTQGLADDGAETNRMYRENYAITHNGTWSFGTSRFVAQYDSTRNNRLEEGLAGSVEGQIGADRSFSASKLENYRLSGELNLPLHALFEQVLTVGAEWNKETLNDPSSLKQGFVGSDSLPGTPAAGSRSPKSKAEIRALYVEDNIELRPGTMLTPGLRLDDHSDFGLNWSPSLNASQTLGEYFTVKAGIARAFKAPNLYQSNPNYLLYTRGNGCPIQTSSGGCYLVGNENLDAETSVNKELGIEFRRDGWVAGLTYFRNDYKNKIVAPLDVMGQTGTGNNILQWSNAKKAVVEGLEGNLLVPLHEDLSWSTNLTYMLQSKDKDTGNPLSVIPEYTLNSTLDWQASERLSTQLTSTIYGRQEPPKHGTSRNTPVVSRKEVGTYGIWGVSAGYTFSENLSVRGGVSNLFDKRLYRQGNSFDAGAATYNEPGRAYYVSMTTSF.

The N-terminal stretch at methionine 1–alanine 28 is a signal peptide. Residues glutamine 57–lysine 184 enclose the TBDR plug domain. Disordered stretches follow at residues glycine 91–arginine 112 and serine 409–lysine 435. Positions leucine 94 to glutamine 108 are enriched in polar residues. Positions arginine 189–phenylalanine 742 constitute a TBDR beta-barrel domain. Cysteine 516 and cysteine 525 form a disulfide bridge. Positions alanine 725–phenylalanine 742 match the TonB C-terminal box motif.

This sequence belongs to the TonB-dependent receptor family.

The protein resides in the cell outer membrane. Specific receptor for the siderophore ferric enterobactin. Probably involved in the transport of siderophores, including host catecholamines such as L-DOPA. This chain is Ferric enterobactin receptor PirA, found in Pseudomonas aeruginosa (strain ATCC 15692 / DSM 22644 / CIP 104116 / JCM 14847 / LMG 12228 / 1C / PRS 101 / PAO1).